The following is a 635-amino-acid chain: 1-deoxy-D-xylulose-5-phosphate synthase (635 aa).

Thiamine diphosphate is bound by residues His-73 and 114–116 (SHA). Residue Asp-146 coordinates Mg(2+). Thiamine diphosphate contacts are provided by residues 147–148 (GA), Asn-176, Tyr-287, and Glu-368. Residue Asn-176 coordinates Mg(2+).

This sequence belongs to the transketolase family. DXPS subfamily. In terms of assembly, homodimer. It depends on Mg(2+) as a cofactor. Thiamine diphosphate is required as a cofactor.

The enzyme catalyses D-glyceraldehyde 3-phosphate + pyruvate + H(+) = 1-deoxy-D-xylulose 5-phosphate + CO2. The protein operates within metabolic intermediate biosynthesis; 1-deoxy-D-xylulose 5-phosphate biosynthesis; 1-deoxy-D-xylulose 5-phosphate from D-glyceraldehyde 3-phosphate and pyruvate: step 1/1. Its function is as follows. Catalyzes the acyloin condensation reaction between C atoms 2 and 3 of pyruvate and glyceraldehyde 3-phosphate to yield 1-deoxy-D-xylulose-5-phosphate (DXP). This Corynebacterium diphtheriae (strain ATCC 700971 / NCTC 13129 / Biotype gravis) protein is 1-deoxy-D-xylulose-5-phosphate synthase.